We begin with the raw amino-acid sequence, 57 residues long: Large ribosomal subunit protein bL32 (57 aa).

The segment covering 1 to 19 has biased composition (basic residues); the sequence is MATPKFKKSRANTHSRRSQ. A disordered region spans residues 1-20; the sequence is MATPKFKKSRANTHSRRSQW.

Belongs to the bacterial ribosomal protein bL32 family.

In Corynebacterium aurimucosum (strain ATCC 700975 / DSM 44827 / CIP 107346 / CN-1) (Corynebacterium nigricans), this protein is Large ribosomal subunit protein bL32.